Consider the following 90-residue polypeptide: MNMPGKTPIEKIVSLSAKPFKVSRGSPRDDKERSYENTFRTPIPYNCPDVSTHLSDCPVCSNLYGKEKLLYIFLGAMIVIIFLVIKNQLN.

Residues leucine 69–leucine 89 form a helical membrane-spanning segment.

It belongs to the IIV-6 466R family.

Its subcellular location is the membrane. This is an uncharacterized protein from Invertebrate iridescent virus 6 (IIV-6).